We begin with the raw amino-acid sequence, 389 residues long: 1-acyl-sn-glycerol-3-phosphate acyltransferase 2 (389 aa).

A helical transmembrane segment spans residues 2–22 (VIAAAVIVPLGLLFFISGLAV). Residues 91–96 (HRSDID) carry the HXXXXD motif motif. 2 helical membrane-spanning segments follow: residues 305–325 (LAVVLSWACVLTLGAIKFLHW) and 333–353 (KGITISALGLGIITLCMQILI). Residues 357 to 389 (QSERSTPAKVVPAKPKDNHHPESSSQTETEKEK) form a disordered region. Positions 370–389 (KPKDNHHPESSSQTETEKEK) are enriched in basic and acidic residues.

The protein belongs to the 1-acyl-sn-glycerol-3-phosphate acyltransferase family. As to quaternary structure, interacts with GPAT9 and DGAT1. In terms of tissue distribution, present in roots, leaves, stems, floral buds and siliques (at protein level). Widely expressed. In contrast to LPAT1, it is not expressed at higher level in leaves.

The protein localises to the endoplasmic reticulum membrane. It carries out the reaction a 1-acyl-sn-glycero-3-phosphate + an acyl-CoA = a 1,2-diacyl-sn-glycero-3-phosphate + CoA. It functions in the pathway phospholipid metabolism; CDP-diacylglycerol biosynthesis; CDP-diacylglycerol from sn-glycerol 3-phosphate: step 2/3. In terms of biological role, converts lysophosphatidic acid (LPA) into phosphatidic acid by incorporating acyl moiety at the 2 position. Has preference for C-18-CoA substrates compared to C-16-CoA substrates. Required for female but not male gametophyte development. This Arabidopsis thaliana (Mouse-ear cress) protein is 1-acyl-sn-glycerol-3-phosphate acyltransferase 2 (LPAT2).